The sequence spans 217 residues: Large ribosomal subunit protein uL3 (217 aa).

The protein belongs to the universal ribosomal protein uL3 family. In terms of assembly, part of the 50S ribosomal subunit. Forms a cluster with proteins L14 and L19.

Functionally, one of the primary rRNA binding proteins, it binds directly near the 3'-end of the 23S rRNA, where it nucleates assembly of the 50S subunit. The sequence is that of Large ribosomal subunit protein uL3 from Mycolicibacterium paratuberculosis (strain ATCC BAA-968 / K-10) (Mycobacterium paratuberculosis).